The primary structure comprises 274 residues: uncharacterized protein (274 aa).

The protein belongs to the PhoU family.

This is an uncharacterized protein from Deinococcus radiodurans (strain ATCC 13939 / DSM 20539 / JCM 16871 / CCUG 27074 / LMG 4051 / NBRC 15346 / NCIMB 9279 / VKM B-1422 / R1).